The sequence spans 330 residues: Lactamase-like protein nscB (330 aa).

The Zn(2+) site is built by His-97, His-99, Asp-101, and His-102. Residue Asp-101 is the Proton donor/acceptor of the active site.

Belongs to the metallo-beta-lactamase superfamily. The cofactor is Zn(2+).

It functions in the pathway secondary metabolite biosynthesis. In terms of biological role, lactamase-like protein; part of the gene cluster that mediates the biosynthesis of neosartoricin, a prenylated anthracenone that exhibits T-cell antiproliferative activity, suggestive of a physiological role as an immunosuppressive agent. The non-reducing polyketide synthase nscA probably synthesizes and cyclizes the decaketide backbone. The hydrolase nscB then mediates the product release through hydrolysis followed by spontaneous decarboxylation. The prenyltransferase nscD catalyzes the addition of the dimethylallyl group to the aromatic C5. The FAD-dependent monooxygenase nscC is then responsible for the stereospecific hydroxylation at C2. There is no gene encoding O-acetyltransferase in the nsc gene cluster; thus, the last step of 2-O-acetylation leading to neosartoricin may be catalyzed by an unidentified O-acetyltransferase. The sequence is that of Lactamase-like protein nscB from Aspergillus fumigatus (strain ATCC MYA-4609 / CBS 101355 / FGSC A1100 / Af293) (Neosartorya fumigata).